Consider the following 331-residue polypeptide: PDZ and LIM domain protein 4 (331 aa).

One can recognise a PDZ domain in the interval 1 to 84; it reads MPHSVTLRGP…HLTLSVSRPE (84 aa). 3 disordered regions span residues 80–99, 105–152, and 221–243; these read VSRP…KAQA, DSEA…GSNS, and AGEG…ASKL. Phosphoserine is present on residues serine 112, serine 116, serine 120, and serine 135. The 60-residue stretch at 254–313 folds into the LIM zinc-binding domain; sequence PECTRCGHGIVGTIVKARDKLYHPECFMCSDCGLNLKQRGYFFLDERLYCESHAKARVKP.

As to quaternary structure, homodimer. Interacts (via C-terminus only or via combined C-terminus and LIM domain, but not LIM domain only) with PTPN13 (via the second or fourth PDZ domains). Found in a complex with PTPN13 and TRIP6. Interacts (via PDZ domain) with ACTN1 and ACTN2 (via C-terminal SDL residues). Interacts (via PDZ domain) with TRIP6 (via the second LIM domain or via the third LIM domain plus C-terminus). Interacts (via LIM domain) with GRIA1 (via C-terminus); this interaction as well as the interaction with alpha-actinin is required for their colocalization in early endosomes. Interacts with PDLIM1. Forms (via LIM domain) a heterodimer with PDLIM3. Interacts directly with SRC (via kinase domain and to a lesser extent the SH2 domain). Post-translationally, phosphorylated on tyrosine residue(s). Can be dephosphorylated by PTPN13.

The protein resides in the cytoplasm. It localises to the cytoskeleton. Its subcellular location is the cell projection. The protein localises to the dendritic spine. It is found in the early endosome membrane. The protein resides in the recycling endosome membrane. It localises to the nucleus. Its subcellular location is the perinuclear region. The protein localises to the lamellipodium. It is found in the synapse. The protein resides in the synaptosome. Suppresses SRC activation by recognizing and binding to active SRC and facilitating PTPN13-mediated dephosphorylation of SRC 'Tyr-419' leading to its inactivation. Inactivated SRC dissociates from this protein allowing the initiation of a new SRC inactivation cycle. Involved in reorganization of the actin cytoskeleton. In nonmuscle cells, binds to ACTN1 (alpha-actinin-1), increases the affinity of ACTN1 to F-actin (filamentous actin), and promotes formation of actin stress fibers. Involved in regulation of the synaptic AMPA receptor transport in dendritic spines of hippocampal pyramidal neurons directing the receptors toward an insertion at the postsynaptic membrane. Links endosomal surface-internalized GRIA1-containing AMPA receptors to the alpha-actinin/actin cytoskeleton. Increases AMPA receptor-mediated excitatory postsynaptic currents in neurons. The sequence is that of PDZ and LIM domain protein 4 (PDLIM4) from Bos taurus (Bovine).